The chain runs to 729 residues: Fatty acid oxidation complex subunit alpha (729 aa).

The enoyl-CoA hydratase/isomerase stretch occupies residues 1-189 (MLYKGDTLYL…KIGLVDGVVK (189 aa)). Position 296 (D296) interacts with substrate. The interval 311–729 (ETPKQAAVLG…ARPVGSLKTA (419 aa)) is 3-hydroxyacyl-CoA dehydrogenase. Residues M324, D343, 400–402 (VVE), K407, and S429 contribute to the NAD(+) site. H450 acts as the For 3-hydroxyacyl-CoA dehydrogenase activity in catalysis. N453 is an NAD(+) binding site. Residues N500 and Y660 each coordinate substrate. Positions 708–729 (RHNEPYYPPVEPARPVGSLKTA) are disordered.

The protein in the N-terminal section; belongs to the enoyl-CoA hydratase/isomerase family. It in the C-terminal section; belongs to the 3-hydroxyacyl-CoA dehydrogenase family. Heterotetramer of two alpha chains (FadB) and two beta chains (FadA).

The catalysed reaction is a (3S)-3-hydroxyacyl-CoA + NAD(+) = a 3-oxoacyl-CoA + NADH + H(+). It carries out the reaction a (3S)-3-hydroxyacyl-CoA = a (2E)-enoyl-CoA + H2O. The enzyme catalyses a 4-saturated-(3S)-3-hydroxyacyl-CoA = a (3E)-enoyl-CoA + H2O. It catalyses the reaction (3S)-3-hydroxybutanoyl-CoA = (3R)-3-hydroxybutanoyl-CoA. The catalysed reaction is a (3Z)-enoyl-CoA = a 4-saturated (2E)-enoyl-CoA. It carries out the reaction a (3E)-enoyl-CoA = a 4-saturated (2E)-enoyl-CoA. It functions in the pathway lipid metabolism; fatty acid beta-oxidation. Involved in the aerobic and anaerobic degradation of long-chain fatty acids via beta-oxidation cycle. Catalyzes the formation of 3-oxoacyl-CoA from enoyl-CoA via L-3-hydroxyacyl-CoA. It can also use D-3-hydroxyacyl-CoA and cis-3-enoyl-CoA as substrate. This chain is Fatty acid oxidation complex subunit alpha, found in Salmonella newport (strain SL254).